The chain runs to 222 residues: Protein GrpE (222 aa).

Positions 1 to 82 (MSDFNKDEYL…KADDTLTPLG (82 aa)) are disordered. Positions 20-71 (SGQAAPAAASADSAAAAAGATQEGAAQPAAAQSQENGDSAAADGADKAGAAD) are enriched in low complexity.

Belongs to the GrpE family. In terms of assembly, homodimer.

The protein resides in the cytoplasm. Functionally, participates actively in the response to hyperosmotic and heat shock by preventing the aggregation of stress-denatured proteins, in association with DnaK and GrpE. It is the nucleotide exchange factor for DnaK and may function as a thermosensor. Unfolded proteins bind initially to DnaJ; upon interaction with the DnaJ-bound protein, DnaK hydrolyzes its bound ATP, resulting in the formation of a stable complex. GrpE releases ADP from DnaK; ATP binding to DnaK triggers the release of the substrate protein, thus completing the reaction cycle. Several rounds of ATP-dependent interactions between DnaJ, DnaK and GrpE are required for fully efficient folding. The sequence is that of Protein GrpE from Bifidobacterium adolescentis (strain ATCC 15703 / DSM 20083 / NCTC 11814 / E194a).